Consider the following 232-residue polypeptide: Fibrillarin-like rRNA/tRNA 2'-O-methyltransferase (232 aa).

S-adenosyl-L-methionine-binding positions include 89 to 90 (TT), 108 to 109 (EF), 133 to 134 (DA), and 153 to 156 (DIAQ).

The protein belongs to the methyltransferase superfamily. Fibrillarin family. As to quaternary structure, interacts with nop5. Component of box C/D small ribonucleoprotein (sRNP) particles that contain rpl7ae, FlpA and nop5, plus a guide RNA. These sRNP particles form homodimers, giving rise to an asymmetric holoenzyme.

In terms of biological role, involved in pre-rRNA and tRNA processing. Utilizes the methyl donor S-adenosyl-L-methionine to catalyze the site-specific 2'-hydroxyl methylation of ribose moieties in rRNA and tRNA. Site specificity is provided by a guide RNA that base pairs with the substrate. Methylation occurs at a characteristic distance from the sequence involved in base pairing with the guide RNA. This chain is Fibrillarin-like rRNA/tRNA 2'-O-methyltransferase, found in Saccharolobus solfataricus (strain ATCC 35092 / DSM 1617 / JCM 11322 / P2) (Sulfolobus solfataricus).